The sequence spans 2616 residues: Serine protease ndl (2616 aa).

An N-terminal signal peptide occupies residues 1-43; the sequence is MNYNMDEMEATRLLRHPRRWWSIGFGKRIVAISILVIIVLLFS. Serine 215 and serine 220 each carry phosphoserine. One copy of the WIID 1 repeat lies at 261-269; sequence ISWIIDGHD. Asparagine 291 is a glycosylation site (N-linked (GlcNAc...) asparagine). The stretch at 320-328 is one WIID 2 repeat; that stretch reads ISWILDHFD. Asparagine 347 carries an N-linked (GlcNAc...) asparagine glycan. A disordered region spans residues 352–375; sequence SASSEPIVDTENTNSDHVPTTENG. N-linked (GlcNAc...) asparagine glycosylation occurs at asparagine 379. Residues 399–407 form a WIID 3 repeat; it reads FDWILDGEE. N-linked (GlcNAc...) asparagine glycosylation occurs at asparagine 417. WIID repeat units follow at residues 446–454 and 477–485; these read FDWIIDGRE and FDWIIDGEE. Asparagine 492 and asparagine 515 each carry an N-linked (GlcNAc...) asparagine glycan. Residues 528–536 form a WIID 6 repeat; that stretch reads FDWIIDGGE. Low complexity predominate over residues 537-547; sequence SSGEVSTSSTS. The segment at 537–574 is disordered; the sequence is SSGEVSTSSTSQPKLTTREAISNPESPRSSHPLDNPTS. The segment covering 548-565 has biased composition (polar residues); it reads QPKLTTREAISNPESPRS. Serine 574 and serine 581 each carry phosphoserine. A glycan (N-linked (GlcNAc...) asparagine) is linked at asparagine 598. Serine 794 carries O-linked (Xyl...) (glycosaminoglycan) serine glycosylation. A disordered region spans residues 798 to 817; that stretch reads GQGANIFSKNASPQKPTNGQ. Residues 804–817 show a composition bias toward polar residues; sequence FSKNASPQKPTNGQ. N-linked (GlcNAc...) asparagine glycosylation occurs at asparagine 827. An O-linked (Xyl...) (glycosaminoglycan) serine glycan is attached at serine 829. Asparagine 861 carries N-linked (GlcNAc...) asparagine glycosylation. LDL-receptor class A domains lie at 889-929 and 955-1006; these read SRCP…ACTC and FGCE…QCSM. Cystine bridges form between cysteine 891–cysteine 905, cysteine 899–cysteine 918, and cysteine 912–cysteine 927. The LDL-receptor class A 2; truncated domain occupies 929 to 956; the sequence is CADRVDEERLCDGYEDCPMGEDELGCFG. Intrachain disulfides connect cysteine 957–cysteine 982, cysteine 964–cysteine 995, and cysteine 989–cysteine 1004. The N-linked (GlcNAc...) asparagine glycan is linked to asparagine 975. The short motif at 1031–1033 is the Cell attachment site element; sequence RGD. N-linked (GlcNAc...) asparagine glycosylation occurs at asparagine 1064. A phosphoserine mark is found at serine 1134 and serine 1136. Positions 1145–1383 constitute a Peptidase S1 1 domain; the sequence is IVGGSYTSAL…YLDWLEMATT (239 aa). Cysteine 1170 and cysteine 1186 form a disulfide bridge. Residues histidine 1185 and aspartate 1233 each act as charge relay system in the active site. Cystine bridges form between cysteine 1276-cysteine 1338, cysteine 1305-cysteine 1317, cysteine 1328-cysteine 1359, cysteine 1396-cysteine 1408, cysteine 1401-cysteine 1421, and cysteine 1415-cysteine 1430. Serine 1332 functions as the Charge relay system in the catalytic mechanism. An LDL-receptor class A 4 domain is found at 1394-1432; sequence QLCPGFICVWGGKRCIAKRQRCDRNVDCLGGEDEVGCTY. Residue asparagine 1445 is glycosylated (N-linked (GlcNAc...) asparagine). 2 disordered regions span residues 1530–1557 and 1683–1704; these read FTVS…PSTN and PTTT…HSEK. Composition is skewed to low complexity over residues 1537 to 1557 and 1683 to 1700; these read TSPS…PSTN and PTTT…SSST. Residues 1713–1743 form the LDL-receptor class A 5; truncated domain; it reads FVCKKMSQIVDIMMRCDRKVDCEDGTDELDC. Cystine bridges form between cysteine 1728-cysteine 1745, cysteine 1734-cysteine 1764, cysteine 1758-cysteine 1773, cysteine 1776-cysteine 1789, cysteine 1783-cysteine 1802, and cysteine 1796-cysteine 1811. An LDL-receptor class A 6; truncated domain is found at 1745-1775; that stretch reads CKDYLKGSLKGLICDGKADCEDLTDEQNCVE. Residues 1774–1813 form the LDL-receptor class A 7 domain; it reads VECQSNEFRCPLSKTCLPLSSRCDNKVDCKFKEDEKDCFA. N-linked (GlcNAc...) asparagine glycans are attached at residues asparagine 1878, asparagine 1956, and asparagine 2023. A Peptidase S1 2 domain is found at 2027–2301; sequence LVNEQLHEAI…LQDIIDKPSC (275 aa). Cysteines 2055 and 2071 form a disulfide. Residues asparagine 2144, asparagine 2173, asparagine 2197, asparagine 2237, and asparagine 2269 are each glycosylated (N-linked (GlcNAc...) asparagine). Cysteine 2177 and cysteine 2230 are joined by a disulfide. LDL-receptor class A domains lie at 2308–2346, 2349–2389, and 2419–2459; these read PDCS…KCRQ, QQCA…ICSC, and CNCT…YCFG. 6 disulfide bridges follow: cysteine 2310–cysteine 2320, cysteine 2315–cysteine 2333, cysteine 2327–cysteine 2344, cysteine 2351–cysteine 2364, cysteine 2358–cysteine 2377, and cysteine 2371–cysteine 2387. The region spanning 2387–2419 is the LDL-receptor class A 10; truncated domain; the sequence is CSCFTYLQATDPSKICDGKRNCWDKSDESSVLC. Asparagine 2420 carries an N-linked (GlcNAc...) asparagine glycan. 3 cysteine pairs are disulfide-bonded: cysteine 2421/cysteine 2435, cysteine 2428/cysteine 2448, and cysteine 2442/cysteine 2457. Asparagine 2556 and asparagine 2601 each carry an N-linked (GlcNAc...) asparagine glycan.

Belongs to the peptidase S1 family. Post-translationally, requires cleavage for activation (presumably). Follicle.

The protein localises to the secreted. It is found in the extracellular space. It localises to the extracellular matrix. Functionally, component of the extracellular signaling pathway that establishes the dorsal-ventral pathway of the embryo. A protease cascade involving ndl, gd, snk and ea results in activation of the spz Toll receptor ligand; acts upstream of gd, snk and ea and is required for proteolytic processing of gd. Activation of ea requires activation of the ndl-gd-snk protease cascade and sulfation of a vitelline membrane component by pip. Localized activation of the Toll receptor in the ventral region of the embryo defines cell identities along the dorsal-ventral continuum. The polypeptide is Serine protease ndl (Drosophila melanogaster (Fruit fly)).